A 344-amino-acid polypeptide reads, in one-letter code: Palmitoyltransferase ZDHHC4 (344 aa).

Residues 1–2 (MD) are Lumenal-facing. The helical transmembrane segment at 3–23 (FLVLFLFYLASVLMGLVLICV) threads the bilayer. Topologically, residues 24–67 (CSKTHSLKGLARGGAQIFSCIIPECLQRAVHGLLHYLFHTRNHT) are cytoplasmic. The chain crosses the membrane as a helical span at residues 68-88 (FIVLHLVLQGMVYTEYTWEVF). Over 89–99 (GYCQELELSLH) the chain is Lumenal. Residues 100–120 (YLLLPYLLLGVNLFFFTLTCG) form a helical membrane-spanning segment. Over 121-192 (TNPGIITKAN…NNCIGAWNIR (72 aa)) the chain is Cytoplasmic. Residues 149 to 199 (VRCSTCDLRKPARSKHCSVCNWCVHRFDHHCVWVNNCIGAWNIRYFLIYVL) form the DHHC domain. Catalysis depends on Cys179, which acts as the S-palmitoyl cysteine intermediate. A helical membrane pass occupies residues 193–213 (YFLIYVLTLTASAATVAIVST). The Lumenal portion of the chain corresponds to 214-255 (TFLVHLVVMSDLYQETYIDDLGHLHVMDTVFLIQYLFLTFPR). The chain crosses the membrane as a helical span at residues 256–276 (IVFMLGFVVVLSFLLGGYLLF). The Cytoplasmic segment spans residues 277–344 (VLYLAATNQT…FPCHERKKQE (68 aa)). The short motif at 341-344 (KKQE) is the Di-lysine motif element.

Belongs to the DHHC palmitoyltransferase family. In terms of assembly, interacts with CPT1A.

It is found in the endoplasmic reticulum membrane. Its subcellular location is the golgi apparatus membrane. The protein localises to the cell membrane. It catalyses the reaction L-cysteinyl-[protein] + hexadecanoyl-CoA = S-hexadecanoyl-L-cysteinyl-[protein] + CoA. Palmitoyltransferase that catalyzes the addition of palmitate onto protein substrates including the D(2) dopamine receptor DRD2, GSK3B or MAVS. Mediates GSK3B palmitoylation to prevent its AKT1-mediated phosphorylation leading to activation of the STAT3 signaling pathway. Also catalyzes MAVS palmitoylation which promotes its stabilization and activation by inhibiting 'Lys-48'- but facilitating 'Lys-63'-linked ubiquitination. In Homo sapiens (Human), this protein is Palmitoyltransferase ZDHHC4.